Consider the following 393-residue polypeptide: MILMVLEIKNGIYWVGVIDWEIRDFHGYGTPYGSTYNSYLIKDKKNVLIDTAKDYMFNELIYGISKFIDPKDLDYIIVNHVEKDHSGCVDKLVEISNATIITNEKGKEHLSLYYDTKDWDFIIVDTGDEINIGDRTLKFIRTPMLHWPDNMLTYCKEEKILFSNDAFGQHIASSERFDYEIGEGIFEHAKDYFANILMPYKMLIPDAIKAVKNLDIELICPSHGVIWKEYINEIIEKYNEWAMNKTKNKAVIVYDTMYNSTKKMAHAIAEGLMEKGVEVKIYRVCETSLSRIMTEILDAKYVLVGSPTVNRNLYPEVGKFLAYMDCIRPLDKIGVAFGSYGWMECATEKIKEIFKNLGFKIVDDECLTVRFAPKEEHLKKCYEFGKRLADIGF.

Residues 250 to 389 (AVIVYDTMYN…KCYEFGKRLA (140 aa)) enclose the Flavodoxin-like domain.

This is an uncharacterized protein from Methanocaldococcus jannaschii (strain ATCC 43067 / DSM 2661 / JAL-1 / JCM 10045 / NBRC 100440) (Methanococcus jannaschii).